The sequence spans 239 residues: MQDPNADTEWNDILRKKGILPPKESLKELEEEAEEEQRILQQSVVKTYEDMTLEELDDHEDEFNEEDERAIEMYRRQRLAEWKVTKLKNKFGEVLEISGKDYVQEVTKAGEGLWVILHLYKQGIPLCALINQHLSGLARKFPDVKFIKAISTTCIPNYPDRNLPTIFVYLEGDIKAQFIGPLVFGGMNLTRDELEWKLSESGAIMTDLEENPKKPIEDVLLSSVRRSALMKRDSDSEGD.

Position 1 is an N-acetylmethionine (M1). The Phosducin domain occupies 32–180; sequence EAEEEQRILQ…EGDIKAQFIG (149 aa). S43, S234, and S236 each carry phosphoserine. The thioredoxin fold stretch occupies residues 91 to 239; that stretch reads FGEVLEISGK…MKRDSDSEGD (149 aa).

This sequence belongs to the phosducin family. In terms of assembly, interacts (via thioredoxin fold region) with KDR/VEGFR2 (via juxtamembrane domain). Forms ternary complexes with the chaperonin CCT complex and actin substrate, leading to inhibition of actin folding. Interacts with XIAP (via BIR 3 and RING domain). Interacts with HSP90AA1 and HSP90AB1. Post-translationally, N-terminal methionine acetylation destabilizes the protein.

The protein localises to the cytoplasm. It is found in the perinuclear region. The protein resides in the endoplasmic reticulum. Its function is as follows. Acts as a chaperone for the angiogenic VEGF receptor KDR/VEGFR2, increasing its abundance by inhibiting its ubiquitination and degradation. Inhibits the folding activity of the chaperonin-containing T-complex (CCT) which leads to inhibition of cytoskeletal actin folding. Acts as a chaperone during heat shock alongside HSP90 and HSP40/70 chaperone complexes. Modulates the activation of caspases during apoptosis. The polypeptide is Phosducin-like protein 3 (PDCL3) (Pongo abelii (Sumatran orangutan)).